A 194-amino-acid chain; its full sequence is Threonylcarbamoyl-AMP synthase (194 aa).

In terms of domain architecture, YrdC-like spans 11–194; it reads FRNLMKIINA…GINYKIIRKG (184 aa).

It belongs to the SUA5 family. TsaC subfamily.

The protein localises to the cytoplasm. The catalysed reaction is L-threonine + hydrogencarbonate + ATP = L-threonylcarbamoyladenylate + diphosphate + H2O. Required for the formation of a threonylcarbamoyl group on adenosine at position 37 (t(6)A37) in tRNAs that read codons beginning with adenine. Catalyzes the conversion of L-threonine, HCO(3)(-)/CO(2) and ATP to give threonylcarbamoyl-AMP (TC-AMP) as the acyladenylate intermediate, with the release of diphosphate. This Wigglesworthia glossinidia brevipalpis protein is Threonylcarbamoyl-AMP synthase.